The sequence spans 527 residues: Putative GTP-binding protein 6 (527 aa).

Residues 306 to 470 form the Hflx-type G domain; it reads PIISILGYTN…QVETAVMKST (165 aa). GTP-binding positions include 312–319, 338–342, 360–363, 429–432, and 448–450; these read GYTNSGKT, FATLD, DTIG, NKID, and SAL. 2 residues coordinate Mg(2+): threonine 319 and threonine 340.

It belongs to the TRAFAC class OBG-HflX-like GTPase superfamily. HflX GTPase family. Mg(2+) is required as a cofactor.

This chain is Putative GTP-binding protein 6 (gtpbp6), found in Xenopus laevis (African clawed frog).